We begin with the raw amino-acid sequence, 372 residues long: 18-hydroxynorfluorocurarine reductase (372 aa).

Zn(2+)-binding residues include Cys-47, Asp-50, His-69, Glu-70, Cys-100, Cys-103, Cys-106, Cys-114, and Cys-172. NADP(+) is bound by residues 197–202 (GLGGIG), Lys-226, 283–285 (LGA), Ser-307, and Arg-354.

It belongs to the zinc-containing alcohol dehydrogenase family. As to quaternary structure, homodimer. Zn(2+) serves as cofactor.

The catalysed reaction is (19E)-cur-19-en-17-al + NADP(+) = norfluorocurarine + NADPH + H(+). It catalyses the reaction 17,18-epoxy-17-hydroxycur-19-ene + NADP(+) = 18-hydroxynorfluorocurarine + NADPH + H(+). It functions in the pathway alkaloid biosynthesis. Its function is as follows. Alcohol dehydrogenase involved in the biosynthesis of curare monoterpene indole alkaloids (MIAs), natural products such as diaboline, a pharmacologically active compound used to regulate blood pressure. Curare alkaloids act as animal glycine receptor antagonists. Catalyzes the conversion of norfluorocurarine to desoxy Wieland-Gumlich aldehyde, and of 18-OH norfluorocurarine to Wieland-Gumlich aldehyde. This is 18-hydroxynorfluorocurarine reductase from Strychnos sp.